Consider the following 178-residue polypeptide: Large ribosomal subunit protein uL6 (178 aa).

This sequence belongs to the universal ribosomal protein uL6 family. Part of the 50S ribosomal subunit.

Its function is as follows. This protein binds to the 23S rRNA, and is important in its secondary structure. It is located near the subunit interface in the base of the L7/L12 stalk, and near the tRNA binding site of the peptidyltransferase center. The protein is Large ribosomal subunit protein uL6 of Symbiobacterium thermophilum (strain DSM 24528 / JCM 14929 / IAM 14863 / T).